The chain runs to 445 residues: MSTILKSLPQGENVGIAFSGGLDTSAALLWMKQKGARVFAYTANLGQPDEADYDEIPRKAMEFGAEKARLVDCRSQLVHEGIAAIQAGAFHVSTGGIAYFNTTPLGRAVTGTMLVSAMKEDGVNIWGDGSTYKGNDIERFYRYGLLTNPDLRIYKPWLDQQFIDELGGRAEMSAFMTAAGFAYKMSSEKAYSTDSNLLGATHEAKDLERLDSGIKIVNPIMGVPFWRDDCAVKAETVAVRFVDGQPVALNGQTFADPVALFLEANAIGGRHGLGMSDQIENRIIEAKSRGIYEAPGMALLHIAYERLVTGIHNEDTIEQYRISGMRLGRLLYQGRWFDSQALMLRETAQRWVARAITGEVTLELRRGNDYSILNTESPNLTYAPERLSMEKVEDAPFTPADRIGQLTMRNLDITDTRAKLDIFAKAGLLSAGEGSHIPKLESDKG.

Residues 17-25 (AFSGGLDTS) and Ala43 each bind ATP. An L-citrulline-binding site is contributed by Tyr99. Gly129 and Thr131 together coordinate ATP. L-aspartate-binding residues include Thr131, Asn135, and Asp136. Asn135 serves as a coordination point for L-citrulline. Asp136 provides a ligand contact to ATP. Arg139 and Ser192 together coordinate L-citrulline. An ATP-binding site is contributed by Asp194. L-citrulline contacts are provided by Thr201, Glu203, and Glu280.

Belongs to the argininosuccinate synthase family. Type 2 subfamily. In terms of assembly, homotetramer.

The protein resides in the cytoplasm. It catalyses the reaction L-citrulline + L-aspartate + ATP = 2-(N(omega)-L-arginino)succinate + AMP + diphosphate + H(+). It functions in the pathway amino-acid biosynthesis; L-arginine biosynthesis; L-arginine from L-ornithine and carbamoyl phosphate: step 2/3. The chain is Argininosuccinate synthase from Rhodopseudomonas palustris (strain BisA53).